We begin with the raw amino-acid sequence, 282 residues long: MKIVRTIAELRQHLSAYKHPAFVPTMGNLHEGHLSLLRQAKPLGDVLVASIFVNRLQFLPHEDFDTYPRTWEADCQALQAAGCDVLFAPGEQELYPEPQTYRVQPPAELADILEGHFRPGFFVGVSTVVMKLFACVQPRVAVFGQKDYQQLMVIRGMVRQFALPIAVLGVATLRAADGLALSSRNNYLTPLERAEAVHLSQSLQQMAKALRAGTVDIAALEQQAMVDLTARGWQPDYLAARRRADLQVPAADEVAALVQNDGLVLLGAARIGNTRLIDNLEV.

Residue Met-26–His-33 participates in ATP binding. Residue His-33 is the Proton donor of the active site. Gln-57 lines the (R)-pantoate pocket. Gln-57 contributes to the beta-alanine binding site. An ATP-binding site is contributed by Gly-144 to Asp-147. Gln-150 contributes to the (R)-pantoate binding site. Residues Leu-173 and Leu-181–Arg-184 contribute to the ATP site.

It belongs to the pantothenate synthetase family. Homodimer.

Its subcellular location is the cytoplasm. It carries out the reaction (R)-pantoate + beta-alanine + ATP = (R)-pantothenate + AMP + diphosphate + H(+). It functions in the pathway cofactor biosynthesis; (R)-pantothenate biosynthesis; (R)-pantothenate from (R)-pantoate and beta-alanine: step 1/1. Catalyzes the condensation of pantoate with beta-alanine in an ATP-dependent reaction via a pantoyl-adenylate intermediate. This Albidiferax ferrireducens (strain ATCC BAA-621 / DSM 15236 / T118) (Rhodoferax ferrireducens) protein is Pantothenate synthetase.